The primary structure comprises 369 residues: Ubiquinone biosynthesis protein COQ4, mitochondrial (369 aa).

A mitochondrion-targeting transit peptide spans 1 to 35 (MLTSQKVSRVLLHSSFLKTPVSTQSRSFVFTTIAT). Zn(2+) contacts are provided by H212, D213, H216, and E228. Over residues 329 to 360 (AAAAATVTQRQRQQQRATATAANATSASSANV) the composition is skewed to low complexity. Residues 329-369 (AAAAATVTQRQRQQQRATATAANATSASSANVKPSNTAGAM) are disordered.

It belongs to the COQ4 family. Component of a multi-subunit COQ enzyme complex, composed of at least COQ3, COQ4, COQ5, COQ6, COQ7 and COQ9. Zn(2+) is required as a cofactor.

The protein localises to the mitochondrion inner membrane. The catalysed reaction is a 4-hydroxy-3-methoxy-5-(all-trans-polyprenyl)benzoate + H(+) = a 2-methoxy-6-(all-trans-polyprenyl)phenol + CO2. It participates in cofactor biosynthesis; ubiquinone biosynthesis. Its function is as follows. Lyase that catalyzes the C1-decarboxylation of 4-hydroxy-3-methoxy-5-(all-trans-polyprenyl)benzoic acid into 2-methoxy-6-(all-trans-polyprenyl)phenol during ubiquinone biosynthesis. The protein is Ubiquinone biosynthesis protein COQ4, mitochondrial of Lodderomyces elongisporus (strain ATCC 11503 / CBS 2605 / JCM 1781 / NBRC 1676 / NRRL YB-4239) (Yeast).